A 144-amino-acid chain; its full sequence is Macromomycin (144 aa).

An N-terminal signal peptide occupies residues 1 to 32 (MLQNTSRFLARAGATVGVAAGLAFSLPADRDG). Intrachain disulfides connect Cys68–Cys78 and Cys120–Cys125.

This sequence belongs to the neocarzinostatin family.

Binds non-covalently to a chromophore which is the cytotoxic and mutagenic component of the antibiotic. The chromophore binds to DNA as a weak intercalator and causes single- and double-strand breaks. This Streptomyces macromomyceticus protein is Macromomycin.